We begin with the raw amino-acid sequence, 614 residues long: Probable ATP-dependent RNA helicase DDX5 (614 aa).

Residues 1–15 (MSSYSSDRDRGRDRG) are compositionally biased toward basic and acidic residues. Positions 1-39 (MSSYSSDRDRGRDRGFGAPRFGGSRTGPLSGKKFGNPGE) are disordered. Phosphoserine is present on S24. N6-acetyllysine; alternate is present on K32. K32 is covalently cross-linked (Glycyl lysine isopeptide (Lys-Gly) (interchain with G-Cter in SUMO2); alternate). Residues K33 and K40 each carry the N6-acetyllysine modification. K45 is covalently cross-linked (Glycyl lysine isopeptide (Lys-Gly) (interchain with G-Cter in SUMO2)). A Glycyl lysine isopeptide (Lys-Gly) (interchain with G-Cter in SUMO2); alternate cross-link involves residue K53. A Glycyl lysine isopeptide (Lys-Gly) (interchain with G-Cter in SUMO); alternate cross-link involves residue K53. A Glycyl lysine isopeptide (Lys-Gly) (interchain with G-Cter in SUMO1); alternate cross-link involves residue K53. Residues 94-122 (LNFYEANFPANVMDVIARQNFTEPTAIQA) carry the Q motif motif. Residues 114–116 (FTE), Q121, and 138–145 (AQTGSGKT) each bind ATP. A Helicase ATP-binding domain is found at 125 to 300 (WPVALSGLDM…EDFLKDYIHI (176 aa)). K236 is subject to N6-acetyllysine. The short motif at 248 to 251 (DEAD) is the DEAD box element. Y297 bears the Phosphotyrosine mark. Positions 328–475 (KLIRLMEEIM…AINPKLLQLV (148 aa)) constitute a Helicase C-terminal domain. Glycyl lysine isopeptide (Lys-Gly) (interchain with G-Cter in SUMO2) cross-links involve residues K340, K343, K388, K391, K411, K437, K451, and K470. A disordered region spans residues 477–504 (DRGSGRSRGRGGMKDDRRDRYSAGKRGG). A transactivation domain region spans residues 477–614 (DRGSGRSRGR…GYPMPTGYSQ (138 aa)). A Phosphoserine modification is found at S480. A compositionally biased stretch (basic and acidic residues) spans 488 to 498 (GMKDDRRDRYS). A Glycyl lysine isopeptide (Lys-Gly) (interchain with G-Cter in SUMO2) cross-link involves residue K523.

It belongs to the DEAD box helicase family. DDX5/DBP2 subfamily. As to quaternary structure, identified in the spliceosome C complex. Component of a ribonucleoprotein complex containing mRNAs and RNA-binding proteins including DDX5, HNRNPH2 and SRSF1 as well as splicing regulator ARVCF. Interacts with RBM4; the interaction occurs in an RNA-independent manner. Interacts with AGO1 and AGO2. Interacts with ESR1, AR, EP300, CREBBP, POLR2A, TP53, RUNX2 and HDAC1. Self-associates. Interacts with DDX17. Interacts with BRDT. The large PER complex involved in the repression of transcriptional termination is composed of at least PER2, CDK9, DDX5, DHX9, NCBP1 and POLR2A (active). Interacts with DHX36; this interaction occurs in a RNA-dependent manner. Interacts with NUPR1. Interacts with ERCC6. Interacts with DDX3X in the cytoplasm; this interaction may be more efficient when both proteins are unphosphorylated. Post-translationally, sumoylated; sumoylation, promoted by PIAS1, promotes interaction with HDAC1 and transcriptional repression activity. Sumoylation also significantly increases stability, and reduces polyubiquitination. Polyubiquitinated, leading to proteasomal degradation. In terms of processing, weakly phosphorylated in the G1/S phase of the cell cycle and much more at G2/M, especially at Thr and Tyr residues.

Its subcellular location is the nucleus. It localises to the nucleolus. The protein resides in the cytoplasm. It carries out the reaction ATP + H2O = ADP + phosphate + H(+). Functionally, involved in the alternative regulation of pre-mRNA splicing; its RNA helicase activity is necessary for increasing tau exon 10 inclusion and occurs in a RBM4-dependent manner. Binds to the tau pre-mRNA in the stem-loop region downstream of exon 10. The rate of ATP hydrolysis is highly stimulated by single-stranded RNA. Involved in transcriptional regulation; the function is independent of the RNA helicase activity. Transcriptional coactivator for androgen receptor AR but probably not ESR1. Synergizes with DDX17 and SRA1 RNA to activate MYOD1 transcriptional activity and involved in skeletal muscle differentiation. Transcriptional coactivator for p53/TP53 and involved in p53/TP53 transcriptional response to DNA damage and p53/TP53-dependent apoptosis. Transcriptional coactivator for RUNX2 and involved in regulation of osteoblast differentiation. Acts as a transcriptional repressor in a promoter-specific manner; the function probably involves association with histone deacetylases, such as HDAC1. As component of a large PER complex is involved in the inhibition of 3' transcriptional termination of circadian target genes such as PER1 and NR1D1 and the control of the circadian rhythms. The chain is Probable ATP-dependent RNA helicase DDX5 (Ddx5) from Mus musculus (Mouse).